The chain runs to 411 residues: MNALAATNRNFRHASRILGLDSKIERSLMIPFREIKVECTIPKDDGTLVSYIGFRVQHDNARGPMKGGIRYHPEVDPDEVNALAQLMTWKTAVADIPYGGAKGGIGCSPRDLSLSELERLTRVFTQKIHDLIGIHTDVPAPDMGTNAQTMAWILDEYSKFHGHSPAVVTGKPIDLGGSLGREAATGRGVVFATEALLAEYGKSIQGLTFVIQGFGNVGTWAAKLIHEKGGKVVAVSDITGAIRNPEGIDINALIKHKDATGSLNDFNGGDAMNSDELLIHECDVLIPCALGGVLNKENAGDVKAKFIVEAANHPTDPDADEILSKKGVIILPDIYANAGGVTVSYFEWVQNIQGFMWEEEKVNLELQKYMTRAFHNIKTMCHTHSCNLRMGAFTLGVNRVARATQLRGWEA.

The active site involves Lys-102.

This sequence belongs to the Glu/Leu/Phe/Val dehydrogenases family.

The protein localises to the mitochondrion. It catalyses the reaction L-glutamate + NAD(+) + H2O = 2-oxoglutarate + NH4(+) + NADH + H(+). It carries out the reaction L-glutamate + NADP(+) + H2O = 2-oxoglutarate + NH4(+) + NADPH + H(+). The protein is Glutamate dehydrogenase 2 (GDH2) of Arabidopsis thaliana (Mouse-ear cress).